A 391-amino-acid chain; its full sequence is Phosphoglycerate kinase (391 aa).

Substrate-binding positions include 21 to 23 (DLN), R36, 59 to 62 (HLGR), R113, and R146. Residues K197, E319, and 345 to 348 (GGDT) each bind ATP.

This sequence belongs to the phosphoglycerate kinase family. In terms of assembly, monomer.

It is found in the cytoplasm. It catalyses the reaction (2R)-3-phosphoglycerate + ATP = (2R)-3-phospho-glyceroyl phosphate + ADP. The protein operates within carbohydrate degradation; glycolysis; pyruvate from D-glyceraldehyde 3-phosphate: step 2/5. The polypeptide is Phosphoglycerate kinase (Xanthomonas campestris pv. campestris (strain 8004)).